Consider the following 551-residue polypeptide: Membrane protein insertase YidC (551 aa).

Residues 3–23 traverse the membrane as a helical segment; it reads ANHIRILLLVTIAIMLISLMG. A compositionally biased stretch (low complexity) spans 30–43; that stretch reads PSNSSQSQTTQTQQ. The disordered stretch occupies residues 30-61; sequence PSNSSQSQTTQTQQDNSHYNSDTPATTNVSTS. Residues 44-61 show a composition bias toward polar residues; it reads DNSHYNSDTPATTNVSTS. 3 helical membrane-spanning segments follow: residues 361-381, 431-451, and 504-524; these read LVGN…LIFY, LSGC…YWVL, and IMMF…SGLV.

It belongs to the OXA1/ALB3/YidC family. Type 1 subfamily. As to quaternary structure, interacts with the Sec translocase complex via SecD. Specifically interacts with transmembrane segments of nascent integral membrane proteins during membrane integration.

The protein localises to the cell inner membrane. Required for the insertion and/or proper folding and/or complex formation of integral membrane proteins into the membrane. Involved in integration of membrane proteins that insert both dependently and independently of the Sec translocase complex, as well as at least some lipoproteins. Aids folding of multispanning membrane proteins. The polypeptide is Membrane protein insertase YidC (Francisella philomiragia subsp. philomiragia (strain ATCC 25017 / CCUG 19701 / FSC 153 / O#319-036)).